Reading from the N-terminus, the 661-residue chain is MINRNTENQFKLVSKYAPSGDQPQAIETLVDNIEGGEKAQILMGATGTGKTYTMSQVIARVNKPTLVIAHNKTLAGQLYSEFKEFFPENAVEYFVSYYDYYQPEAYVPSSDTYIEKDSSVNDEIDKLRHSATSALLERNDVIVVASVSCIYGLGSPKEYSDSVVSLRPGQEISRDQLLNALVDIQFERNDIDFQRGRFRVRGDVVEIFPASRDEHAFRVEFFGDEIDRIREIESLTGKVLGDVDHLAIFPATHFVTNDDHMETAIAKIQAELEEQLKVFEAEGKLLEAQRLKQRTDYDIEMLREMGYTNGVENYSRHMDGRSEGEPPYTLLDFFPEDYLIMIDESHMTMGQIKGMYNGDRSRKEMLVNYGFRLPSALDNRPLRREEFESHVHQIVYVSATPGDYEMEQTETVVEQIIRPTGLLDPEVEVRPTMGQMDDLLGEINARVEKGERTFITTLTKKMAEDLTDYLKEMGVKVKYMHSDIKTLERTEIIRDLRLGVFDVLIGINLLREGIDVPEVSLVAILDADKEGFLRNERGLIQTIGRAARNSEGHVIMYADKVTESMRKAMEETARRRQIQMAYNEEHGIIPQTIKKEIRDLISVTKAVTQDKEEVVDFNALNKDERKAMIKKLEGQMQEAAEVLDFELAAQIRDMVIELKNM.

Residues 31–186 (DNIEGGEKAQ…LLNALVDIQF (156 aa)) enclose the Helicase ATP-binding domain. 44–51 (GATGTGKT) contributes to the ATP binding site. The Beta-hairpin signature appears at 97–120 (YYDYYQPEAYVPSSDTYIEKDSSV). The Helicase C-terminal domain maps to 435-601 (QMDDLLGEIN…TIKKEIRDLI (167 aa)). The UVR domain maps to 626-661 (KAMIKKLEGQMQEAAEVLDFELAAQIRDMVIELKNM).

It belongs to the UvrB family. In terms of assembly, forms a heterotetramer with UvrA during the search for lesions. Interacts with UvrC in an incision complex.

The protein resides in the cytoplasm. Functionally, the UvrABC repair system catalyzes the recognition and processing of DNA lesions. A damage recognition complex composed of 2 UvrA and 2 UvrB subunits scans DNA for abnormalities. Upon binding of the UvrA(2)B(2) complex to a putative damaged site, the DNA wraps around one UvrB monomer. DNA wrap is dependent on ATP binding by UvrB and probably causes local melting of the DNA helix, facilitating insertion of UvrB beta-hairpin between the DNA strands. Then UvrB probes one DNA strand for the presence of a lesion. If a lesion is found the UvrA subunits dissociate and the UvrB-DNA preincision complex is formed. This complex is subsequently bound by UvrC and the second UvrB is released. If no lesion is found, the DNA wraps around the other UvrB subunit that will check the other stand for damage. This is UvrABC system protein B from Streptococcus suis (strain 98HAH33).